An 809-amino-acid chain; its full sequence is Transitional endoplasmic reticulum ATPase homolog 1 (809 aa).

Positions Met-1–Ala-21 are disordered. The segment covering Gln-8–Ala-21 has biased composition (basic and acidic residues). Residues Pro-253 to Leu-259, Asn-354, His-390, and Gly-527 to Leu-532 each bind ATP. The interval Phe-779–Asn-809 is disordered. The interaction with ufd-2 stretch occupies residues Asp-803–Asn-809.

This sequence belongs to the AAA ATPase family. CDC48 subfamily. As to quaternary structure, homohexamer; oligomerization is ATP-independent. Forms a ring-shaped particle of 18.3 nm diameter, that displays 6-fold radial symmetry. Interacts with cdc-48.2 and thus may form heterohexamers. Forms a complex composed of cdc-48.1, him-6 and crp-1; within the complex, interacts with helicase him-6 and GTPase crp-1. Forms a complex composed of deubiquitinating enzyme atx-3, adapter ubxn-5 and cdc-48.1; within the complex, interacts (via N-terminus) with ubxn-5 and with atx-3. Forms a complex composed of deubiquitinating enzyme atx-3, E4 ubiquitin-protein ligase ufd-2 and cdc-48.1; within the complex, interacts with atx-3 and (via DDDLYN motif) with ufd-2. Interacts (via N-terminus) with atx-3 (via RRDR motif); the interaction is not required for atx-3 enzymatic activity. Forms a complex composed of cdc-48.1, myosin chaperone unc-45, ubiquitin-protein ligases ufd-2 and chn-1; within the complex, interacts (via DDDLYN motif) with ufd-2 and targets myosin chaperone unc-45 for proteasomal degradation. Forms a complex composed of ubxn-3, ufd-1, npl-4.1 and cdc-48.1; within the complex, interacts (via N-terminus) with ubxn-3 (via FPK motif) and with ufd-1. Forms a complex composed of ubxn-3, cdc-48.1 and/or cdc-48.2 and substrate cdt-1. Interacts (via N-terminus) with ubxn-1. Interacts (via N-terminus) with ubxn-2. Interacts (via N-terminus) with ubxn-4. Interacts with ubxn-6. Interacts with ufd-3. Does not interact with air-2. In terms of tissue distribution, expressed in germ cells and spermatheca. Expressed in body wall muscles.

The protein localises to the cytoplasm. It localises to the perinuclear region. The catalysed reaction is ATP + H2O = ADP + phosphate + H(+). With respect to regulation, the first ATP-binding region has low ATPase activity. The second ATP-binding region is responsible for ATPase activity. ATP binding to the first ATP-binding region induces intrinsic activity of the second ATP-binding region. While ATP binding to the first ATP-binding region appears to prevent ATP hydrolysis by the second ATP-binding region, ADP-binding to first region promotes the coordinate and cooperative ATPase cycle of the second ATP-binding region. ATP binding to the first ATP-binding region induces a conformational change, promoting the rotation of the first ATP-binding region relative to the second ATP-binding region in the hexamer. Inhibited by N-ethylmaleimide (NEM). Functionally, ATP-dependent chaperone which probably uses the energy provided by ATP hydrolysis to generate mechanical force to unfold substrate proteins, disassemble protein complexes, and disaggregate protein aggregates. Can also prevent aggregation of unfolded proteins also in an ATP-independent manner. Targets polyubiquitinated proteins for proteasomal degradation by binding to 'Lys-48'-linked polyubiquitin chains. Involved in the cytoplasmic elimination of misfolded proteins exported from the ER. This pathway, known as ERAD, prevents the activation of the unfolded protein response (UPR) caused by the accumulation of misfolded proteins in the ER. In association with helicase him-6 and GTPase crp-1, regulates the unfolded protein response (UPR) following ER stress, probably independently of the ERAD pathway. Together with udf-2 and chn-1, regulates myosin assembly in body wall muscles by targeting myosin chaperone unc-45 for proteasomal degradation. Together with the ufd-1-npl-4 complex, controls the switch from spermatogenesis to oogenesis by regulating E3 ligase cul-2 complex-mediated tra-1 proteasomal degradation. During oocyte meiosis and together with cdc-48.2, required for chromosome condensation at the diakinesis phase in prophase I and for progression of metaphase I. During the first embryonic cell division, regulates DNA replication and thus chromosome segregation and decondensation, and nuclear envelope re-assembly. In S phase and in association with ufd-1, npl-4.1 and/or npl-4.2 and ubxn-3, ensures the degradation of DNA licensing factor cdt-1 after the initiation of DNA replication and thus the disassembly of the DNA replication CMG helicase complex by promoting the dissociation from chromatin of several of its components including cdc-45 and sld-5. Regulates ubxn-3 nuclear localization during S phase. During the first embryonic cell divisions and together with cdc-48.2, regulates the re-assembly of the nuclear envelope after mitosis possibly by inactivating kinase air-2, a component of the chromosomal passenger complex (CPC). However, in another study, cdc-48.1 does not appear to be implicated in the regulation of air-2. The protein is Transitional endoplasmic reticulum ATPase homolog 1 of Caenorhabditis elegans.